The sequence spans 232 residues: Ion-translocating oxidoreductase complex subunit E (232 aa).

A run of 5 helical transmembrane segments spans residues 39 to 59 (LGLG…ISSL), 69 to 89 (IPIY…LINA), 92 to 112 (FGLY…CIVV), 125 to 145 (ALSA…MFVL), and 182 to 202 (PFLL…MLAV).

This sequence belongs to the NqrDE/RnfAE family. As to quaternary structure, the complex is composed of six subunits: RnfA, RnfB, RnfC, RnfD, RnfE and RnfG.

It is found in the cell inner membrane. Its function is as follows. Part of a membrane-bound complex that couples electron transfer with translocation of ions across the membrane. This is Ion-translocating oxidoreductase complex subunit E from Klebsiella pneumoniae (strain 342).